The chain runs to 92 residues: Signal recognition particle 19 kDa protein (92 aa).

It belongs to the SRP19 family. In terms of assembly, part of the signal recognition particle protein translocation system, which is composed of SRP and FtsY. Archaeal SRP consists of a 7S RNA molecule of 300 nucleotides and two protein subunits: SRP54 and SRP19.

It is found in the cytoplasm. In terms of biological role, involved in targeting and insertion of nascent membrane proteins into the cytoplasmic membrane. Binds directly to 7S RNA and mediates binding of the 54 kDa subunit of the SRP. This Haloarcula marismortui (strain ATCC 43049 / DSM 3752 / JCM 8966 / VKM B-1809) (Halobacterium marismortui) protein is Signal recognition particle 19 kDa protein.